The sequence spans 72 residues: Translation initiation factor IF-1 (72 aa).

The region spanning 1–72 (MSKDDVIQMQ…SRARIVFRAK (72 aa)) is the S1-like domain.

This sequence belongs to the IF-1 family. In terms of assembly, component of the 30S ribosomal translation pre-initiation complex which assembles on the 30S ribosome in the order IF-2 and IF-3, IF-1 and N-formylmethionyl-tRNA(fMet); mRNA recruitment can occur at any time during PIC assembly.

The protein resides in the cytoplasm. One of the essential components for the initiation of protein synthesis. Stabilizes the binding of IF-2 and IF-3 on the 30S subunit to which N-formylmethionyl-tRNA(fMet) subsequently binds. Helps modulate mRNA selection, yielding the 30S pre-initiation complex (PIC). Upon addition of the 50S ribosomal subunit IF-1, IF-2 and IF-3 are released leaving the mature 70S translation initiation complex. In Methylibium petroleiphilum (strain ATCC BAA-1232 / LMG 22953 / PM1), this protein is Translation initiation factor IF-1.